The chain runs to 321 residues: Ribose-phosphate pyrophosphokinase (321 aa).

ATP is bound by residues 39–41 (DGE) and 98–99 (RQ). Mg(2+) is bound by residues His132 and Asp170. Lys195 is an active-site residue. D-ribose 5-phosphate is bound by residues Arg197, Asp221, and 225-229 (DTGGT).

This sequence belongs to the ribose-phosphate pyrophosphokinase family. Class I subfamily. Homohexamer. Mg(2+) serves as cofactor.

Its subcellular location is the cytoplasm. It carries out the reaction D-ribose 5-phosphate + ATP = 5-phospho-alpha-D-ribose 1-diphosphate + AMP + H(+). Its pathway is metabolic intermediate biosynthesis; 5-phospho-alpha-D-ribose 1-diphosphate biosynthesis; 5-phospho-alpha-D-ribose 1-diphosphate from D-ribose 5-phosphate (route I): step 1/1. Functionally, involved in the biosynthesis of the central metabolite phospho-alpha-D-ribosyl-1-pyrophosphate (PRPP) via the transfer of pyrophosphoryl group from ATP to 1-hydroxyl of ribose-5-phosphate (Rib-5-P). The sequence is that of Ribose-phosphate pyrophosphokinase from Mycoplasmopsis pulmonis (strain UAB CTIP) (Mycoplasma pulmonis).